We begin with the raw amino-acid sequence, 805 residues long: Putative cation-transporting ATPase MJ1226 (805 aa).

A run of 4 helical transmembrane segments spans residues 53 to 73, 75 to 95, 226 to 246, and 258 to 278; these read SYFWNPIAWMIEIAAILSAII, HWVDFVIILILLLVNGVVGFW, IGDYLIVLAVILIAIMVAVEL, and FALVLAVSAIPAAMPAVLSIT. Catalysis depends on aspartate 311, which acts as the 4-aspartylphosphate intermediate. 6 helical membrane passes run 615–637, 641–663, 680–700, 712–734, 747–769, and 773–790; these read YVIYRITETIRILFFVELCILIL, PITALMIVLLAILNDIPILAIAY, ILMLSTALGLSGVVSSFLIFY, ELQSFVFLKLILAGHATIFVTRI, LLFWGVMGTNIIGTIVAAEGIFM, and GWDLALFMWLYAHVWMLI.

The protein belongs to the cation transport ATPase (P-type) (TC 3.A.3) family. Type IIIA subfamily.

The protein localises to the cell membrane. It carries out the reaction ATP + H2O = ADP + phosphate + H(+). This Methanocaldococcus jannaschii (strain ATCC 43067 / DSM 2661 / JAL-1 / JCM 10045 / NBRC 100440) (Methanococcus jannaschii) protein is Putative cation-transporting ATPase MJ1226.